The following is a 448-amino-acid chain: MSTFRQEDVEDHYEMGEELGSGQFAIVRKCQQKGTGMEYAAKFIKKRRLPSSRRGVSREEIEREVSILREIRHPNIITLHDVFENKTDVVLILELVSGGELFDFLAEKESLTEDEATQFLKQILDGVHYLHSKRIAHFDLKPENIMLLDKHAASPRIKLIDFGIAHRIEAGSEFKNIFGTPEFVAPEIVNYEPLGLEADMWSIGVITYILLSGASPFLGETKQETLTNISAVNYDFDEEYFSSTSELAKDFIRRLLVKDPKRRMTIAQSLEHSWIKVRRREDGARKPERRRLRAARLREYSLKSHSSMPRNTSYASFERFSRVLEDVAAAEQGLRELQRGRRQCRERVCALRVAAEQREARCRDGSAGLGRDLRRLRTELGRTEALRTRAQEEARAALLGAGGLKRRLCRLENRYDALAAQVAAEVQFVRDLVRALEQERLQAECGVR.

Residues 13 to 275 enclose the Protein kinase domain; that stretch reads YEMGEELGSG…IAQSLEHSWI (263 aa). ATP is bound by residues 19-27 and Lys-42; that span reads LGSGQFAIV. Asp-139 (proton acceptor) is an active-site residue. Residues 161–204 form an activation segment region; sequence DFGIAHRIEAGSEFKNIFGTPEFVAPEIVNYEPLGLEADMWSIG. Phosphothreonine is present on residues Thr-180 and Thr-225. Thr-265 is modified (phosphothreonine; by autocatalysis). Thr-265 is subject to Phosphothreonine; by ROCK1. The residue at position 304 (Ser-304) is a Phosphoserine; by DAPK1. Residue Ser-306 is modified to Phosphoserine; by autocatalysis and DAPK1. 3 positions are modified to phosphoserine; by DAPK1: Ser-307, Ser-313, and Ser-321. Positions 390-448 are interaction with CDC5L; it reads AQEEARAALLGAGGLKRRLCRLENRYDALAAQVAAEVQFVRDLVRALEQERLQAECGVR. A required for interaction with ATF4 but not with PAWR region spans residues 418-448; the sequence is LAAQVAAEVQFVRDLVRALEQERLQAECGVR. The segment at 422-436 is leucine-zipper; sequence VAAEVQFVRDLVRAL.

The protein belongs to the protein kinase superfamily. CAMK Ser/Thr protein kinase family. DAP kinase subfamily. As to quaternary structure, homooligomer in its kinase-active form (homotrimers and homodimers are reported); monomeric in its kinase-inactive form. Homodimerization is required for activation segment autophosphorylation. Interacts with DAXX, ATF4, NLK, TCF7L2, UBE2D1, UBE2D2, UBE2D3 and CDC5L. Interacts with PAWR; also demonstrated in aorta smooth muscle cells indicative for the cytoskeletal targeting function of PAWR. Interacts with AR; enhanced by AATF. Interacts with LUZP1; the interaction is likely to occur throughout the cell cycle and reduces the LUZP1-mediated suppression of MYL9 phosphorylation. Mg(2+) serves as cofactor. In terms of processing, ubiquitinated. Ubiquitination mediated by the UBE2D3 E3 ligase does not lead to proteasomal degradation, but influences promyelocytic leukemia protein nuclear bodies (PML-NBs) formation in the nucleus. The phosphorylation status is critical for kinase activity, oligomerization and intracellular localization. Phosphorylation at Thr-180, Thr-225 and Thr-265 is essential for activity. The phosphorylated form is localized in the cytoplasm and nuclear translocation or retention is maximal when it is not phosphorylated. Phosphorylation increases the trimeric form, and its dephosphorylation favors a kinase-inactive monomeric form. In terms of tissue distribution, ubiquitously expressed in all tissue types examined. High levels in brain, heart, lung and spleen, lower expression in kidney, liver, skeletal muscle and testis. Isoform 2 is expressed in the smooth muscle.

Its subcellular location is the nucleus. It localises to the PML body. It is found in the cytoplasm. The protein resides in the cytoskeleton. The protein localises to the microtubule organizing center. Its subcellular location is the chromosome. It localises to the centromere. It is found in the spindle. The protein resides in the midbody. The catalysed reaction is L-seryl-[protein] + ATP = O-phospho-L-seryl-[protein] + ADP + H(+). It carries out the reaction L-threonyl-[protein] + ATP = O-phospho-L-threonyl-[protein] + ADP + H(+). A sequential activation is proposed: autophosphorylation at consensus sites is leading to dimerization of the catalytic domain and activation segment exchange (producing an active confirmation of both kinase modules in trans) followed by phosphorylation at Thr-180 in the activation segment and at other regulatory sites. Phosphorylation at Thr-180, Thr-225 and Thr-265 is essential for activity. Inhibited by pyridone 6 (K00225), a potent, ATP-competitive inhibitor. Phosphorylation at Thr-180, Thr-225 and Thr-265 is essential for activity. In terms of biological role, serine/threonine kinase which is involved in the regulation of apoptosis, autophagy, transcription, translation and actin cytoskeleton reorganization. Regulates both type I (caspase-dependent) apoptotic and type II (caspase-independent) autophagic cell deaths signal, depending on the cellular setting. Involved in formation of promyelocytic leukemia protein nuclear body (PML-NB). Involved in apoptosis involving PAWR which mediates cytoplasmic relocation; in vitro phosphorylates PAWR. Regulates myosin phosphorylation in both smooth muscle and non-muscle cells. In smooth muscle, regulates myosin either directly by phosphorylating MYL12B and MYL9 or through inhibition of smooth muscle myosin phosphatase (SMPP1M) via phosphorylation of PPP1R12A; the inhibition of SMPP1M functions to enhance muscle responsiveness to Ca(2+) and promote a contractile state. Phosphorylates MYL12B in non-muscle cells leading to reorganization of actin cytoskeleton such as in regulation of cell polarity and cell migration. Positively regulates canonical Wnt/beta-catenin signaling through interaction with NLK and TCF7L2; disrupts the NLK-TCF7L2 complex thereby influencing the phosphorylation of TCF7L2 by NLK. Phosphorylates RPL13A on 'Ser-77' upon interferon-gamma activation which is causing RPL13A release from the ribosome, RPL13A association with the GAIT complex and its subsequent involvement in transcript-selective translation inhibition. Phosphorylates STAT3 and enhances its transcriptional activity. Enhances transcription from AR-responsive promoters in a hormone- and kinase-dependent manner. Phosphorylates histone H3 on 'Thr-11' at centromeres during mitosis. This is Death-associated protein kinase 3 (Dapk3) from Rattus norvegicus (Rat).